Consider the following 360-residue polypeptide: Phospho-N-acetylmuramoyl-pentapeptide-transferase (360 aa).

The next 10 membrane-spanning stretches (helical) occupy residues Ile-27–Trp-47, Thr-73–Leu-93, Ser-94–Val-114, Trp-132–Gly-152, Val-168–Ser-188, Gly-199–Thr-219, Ala-236–Phe-256, Val-263–Leu-283, Phe-288–Val-308, and Val-338–Lys-358.

The protein belongs to the glycosyltransferase 4 family. MraY subfamily. Requires Mg(2+) as cofactor.

The protein resides in the cell inner membrane. It catalyses the reaction UDP-N-acetyl-alpha-D-muramoyl-L-alanyl-gamma-D-glutamyl-meso-2,6-diaminopimeloyl-D-alanyl-D-alanine + di-trans,octa-cis-undecaprenyl phosphate = di-trans,octa-cis-undecaprenyl diphospho-N-acetyl-alpha-D-muramoyl-L-alanyl-D-glutamyl-meso-2,6-diaminopimeloyl-D-alanyl-D-alanine + UMP. It participates in cell wall biogenesis; peptidoglycan biosynthesis. Its function is as follows. Catalyzes the initial step of the lipid cycle reactions in the biosynthesis of the cell wall peptidoglycan: transfers peptidoglycan precursor phospho-MurNAc-pentapeptide from UDP-MurNAc-pentapeptide onto the lipid carrier undecaprenyl phosphate, yielding undecaprenyl-pyrophosphoryl-MurNAc-pentapeptide, known as lipid I. The protein is Phospho-N-acetylmuramoyl-pentapeptide-transferase of Pectobacterium carotovorum subsp. carotovorum (strain PC1).